We begin with the raw amino-acid sequence, 297 residues long: Pyridoxal 5'-phosphate synthase subunit PdxS (297 aa).

Aspartate 27 is a binding site for D-ribose 5-phosphate. Lysine 84 functions as the Schiff-base intermediate with D-ribose 5-phosphate in the catalytic mechanism. Glycine 156 serves as a coordination point for D-ribose 5-phosphate. D-glyceraldehyde 3-phosphate is bound at residue arginine 168. D-ribose 5-phosphate-binding positions include glycine 217 and 238-239 (GS).

It belongs to the PdxS/SNZ family. In the presence of PdxT, forms a dodecamer of heterodimers.

The enzyme catalyses aldehydo-D-ribose 5-phosphate + D-glyceraldehyde 3-phosphate + L-glutamine = pyridoxal 5'-phosphate + L-glutamate + phosphate + 3 H2O + H(+). Its pathway is cofactor biosynthesis; pyridoxal 5'-phosphate biosynthesis. In terms of biological role, catalyzes the formation of pyridoxal 5'-phosphate from ribose 5-phosphate (RBP), glyceraldehyde 3-phosphate (G3P) and ammonia. The ammonia is provided by the PdxT subunit. Can also use ribulose 5-phosphate and dihydroxyacetone phosphate as substrates, resulting from enzyme-catalyzed isomerization of RBP and G3P, respectively. This chain is Pyridoxal 5'-phosphate synthase subunit PdxS, found in Corynebacterium efficiens (strain DSM 44549 / YS-314 / AJ 12310 / JCM 11189 / NBRC 100395).